A 434-amino-acid chain; its full sequence is Glutamyl-tRNA reductase (434 aa).

Substrate contacts are provided by residues 52-55 (TCNR), Ser115, 120-122 (ETQ), and Gln126. Cys53 (nucleophile) is an active-site residue. NADP(+) is bound at residue 195–200 (GAGEMI).

It belongs to the glutamyl-tRNA reductase family. In terms of assembly, homodimer.

The enzyme catalyses (S)-4-amino-5-oxopentanoate + tRNA(Glu) + NADP(+) = L-glutamyl-tRNA(Glu) + NADPH + H(+). Its pathway is porphyrin-containing compound metabolism; protoporphyrin-IX biosynthesis; 5-aminolevulinate from L-glutamyl-tRNA(Glu): step 1/2. In terms of biological role, catalyzes the NADPH-dependent reduction of glutamyl-tRNA(Glu) to glutamate 1-semialdehyde (GSA). The sequence is that of Glutamyl-tRNA reductase from Cupriavidus necator (strain ATCC 17699 / DSM 428 / KCTC 22496 / NCIMB 10442 / H16 / Stanier 337) (Ralstonia eutropha).